The chain runs to 771 residues: U3 small nucleolar RNA-associated protein 14 homolog A (771 aa).

Residues 23-49 (PKDYLLSESEDEGDNDGERKHQKLLEA) form a disordered region. Phosphoserine is present on residues S29, S31, S52, S77, and S81. Residues 40–67 (ERKHQKLLEAISSLDGKNRRKLAERSEA) adopt a coiled-coil conformation. Residue K122 forms a Glycyl lysine isopeptide (Lys-Gly) (interchain with G-Cter in SUMO2) linkage. T205 bears the Phosphothreonine mark. Coiled coils occupy residues 216–290 (SLEE…EKAR) and 317–347 (LEAR…EEEE). 2 disordered regions span residues 334–355 (TQKL…DVEE) and 367–557 (MNAD…KKEQ). Residues 342-355 (ESEEEEGGTEDVEE) are compositionally biased toward acidic residues. Residues 399 to 436 (LEAHGVSESEGEERPVAEEEILLREFEERRSLRKRSEL) are compositionally biased toward basic and acidic residues. A phosphoserine mark is found at S405 and S407. R433 carries the post-translational modification Citrulline. Phosphoserine is present on residues S437 and S445. K449 is covalently cross-linked (Glycyl lysine isopeptide (Lys-Gly) (interchain with G-Cter in SUMO2)). Residue S453 is modified to Phosphoserine. A compositionally biased stretch (basic and acidic residues) spans 504–529 (RPERVQTLEELEELGKEECFQNKELP). Residue K519 forms a Glycyl lysine isopeptide (Lys-Gly) (interchain with G-Cter in SUMO2) linkage. The segment covering 535 to 544 (GQQSERTPNN) has biased composition (polar residues). The segment covering 547–557 (DAPKEKKKKEQ) has biased composition (basic and acidic residues). S569 is modified (phosphoserine). Citrulline is present on R589. K733 is covalently cross-linked (Glycyl lysine isopeptide (Lys-Gly) (interchain with G-Cter in SUMO2)). The span at 740-751 (RSSSRSDLSVIQ) shows a compositional bias: polar residues. Positions 740 to 771 (RSSSRSDLSVIQRNPKRITTRHKKQLKKCSVD) are disordered. The span at 753–771 (NPKRITTRHKKQLKKCSVD) shows a compositional bias: basic residues.

This sequence belongs to the UTP14 family. Interacts with DHX37. Post-translationally, citrullinated by PADI4. Ubiquitously expressed.

It localises to the nucleus. The protein localises to the nucleolus. Its function is as follows. May be required for ribosome biogenesis. The chain is U3 small nucleolar RNA-associated protein 14 homolog A (UTP14A) from Homo sapiens (Human).